Here is a 254-residue protein sequence, read N- to C-terminus: Chalcone isomerase cfoK (254 aa).

Catalysis depends on residues His33 and Tyr50.

The enzyme catalyses a chalcone = a flavanone.. It functions in the pathway secondary metabolite biosynthesis; flavonoid biosynthesis. Functionally, chalcone isomerase; part of the gene cluster that mediates the biosynthesis of chlorflavonin, a fungal flavonoid with acetolactate synthase inhibitory activity. Within the pathway, cfoK acts as chalcone isomerase (CHI), the key enzyme responsible for the tricyclic formation of flavanone through Michael-type intramolecular cyclization of chalcone. The hydrogen at C2'-OH is extracted by the imidazole ring of His-33, which induces the oxa-Michael addition to form the intermediate enolate through 6-endo-trig mode cyclization. The enolate can then be stabilized by a hydrogen bond with the Tyr-50 residue. Following enol tautomerization, the C ring, a gamma-pyranone ring, is formed. The pathway begins with the PKS-NRPS hybrid synthetase cfoA that uses benzoic acid or p-hydroxybenzoic acid as a starter unit with four rounds of chain elongation using malonyl-CoA to form the chalcone skeleton. Then, a new type of chalcone isomerase, cfoK, catalyzes the conversion of the chalcone into a flavanone by a histidine-mediated oxa-Michael addition mechanism. The desaturation of flavanone to flavone is catalyzed by a new type of flavone synthase, the flavin mononucleotide (FMN)-dependent oxidoreductase cfoJ. Monooxygenases cfoF, cfoG, and P450 cfoH are responsible for the hydroxylation of the flavonoid skeleton at sites C3, C8, and C2', respectively. Like cfoF, the dehydratase cfoI plays also a role in the hydroxylation of position C3. Methyltransferases cfoB, cfoC, and cfoD then catalyze the methylation of C7-OH, C8-OH, and C3-OH, respectively. Finally, the monooxygenase cfoE is responsible for the chlorination of flavonoid at position C3'. The polypeptide is Chalcone isomerase cfoK (Aspergillus candidus).